The sequence spans 61 residues: DNA-directed RNA polymerase subunit Rpo10 (61 aa).

Zn(2+) contacts are provided by Cys6, Cys9, Cys42, and Cys43.

Belongs to the archaeal Rpo10/eukaryotic RPB10 RNA polymerase subunit family. In terms of assembly, part of the RNA polymerase complex. Requires Zn(2+) as cofactor.

It localises to the cytoplasm. The enzyme catalyses RNA(n) + a ribonucleoside 5'-triphosphate = RNA(n+1) + diphosphate. In terms of biological role, DNA-dependent RNA polymerase (RNAP) catalyzes the transcription of DNA into RNA using the four ribonucleoside triphosphates as substrates. The protein is DNA-directed RNA polymerase subunit Rpo10 of Methanothrix thermoacetophila (strain DSM 6194 / JCM 14653 / NBRC 101360 / PT) (Methanosaeta thermophila).